The chain runs to 191 residues: Cell division protein SepF (191 aa).

Polar residues predominate over residues 157-178; that stretch reads YLNESPAQPVQTTTSFGRTATP. The interval 157-191 is disordered; the sequence is YLNESPAQPVQTTTSFGRTATPTPAWGTDSRYAAQ.

It belongs to the SepF family. As to quaternary structure, homodimer. Interacts with FtsZ.

Its subcellular location is the cytoplasm. Cell division protein that is part of the divisome complex and is recruited early to the Z-ring. Probably stimulates Z-ring formation, perhaps through the cross-linking of FtsZ protofilaments. Its function overlaps with FtsA. The chain is Cell division protein SepF from Synechococcus elongatus (strain ATCC 33912 / PCC 7942 / FACHB-805) (Anacystis nidulans R2).